The sequence spans 296 residues: Nicotinate dehydrogenase FAD-subunit (296 aa).

In terms of domain architecture, FAD-binding PCMH-type spans 1–179 (MKDFEFFAPK…TEVIIDRPDA (179 aa)). FAD contacts are provided by residues 29-36 (IIAGGTDL), Gly101, 110-114 (TIGGN), Asp123, Arg160, Met169, and Lys187.

Heterooctamer of NDHM, NDHL, NDHS and NDHF. Dimer of heterotetramers. Requires FAD as cofactor.

The catalysed reaction is nicotinate + NADP(+) + H2O = 6-hydroxynicotinate + NADPH + H(+). It participates in cofactor degradation; nicotinate degradation; 6-hydroxynicotinate from nicotinate: step 1/1. Its activity is regulated as follows. Reversibly inactivated by selenide and sulfide. Not inhibited by cyanide. Functionally, catalyzes the hydroxylation of nicotinate to 6-hydroxynicotinate. Also active against 2-pyrazinecarboxylic acid, but inactive against other nicotinate analogs. The sequence is that of Nicotinate dehydrogenase FAD-subunit (ndhF) from Eubacterium barkeri (Clostridium barkeri).